We begin with the raw amino-acid sequence, 598 residues long: NADH-quinone oxidoreductase subunit C/D (598 aa).

Positions 1–189 are NADH dehydrogenase I subunit C; sequence MTDQIAQNSA…DPYVLTKQKE (189 aa). Residues 213–598 are NADH dehydrogenase I subunit D; sequence DFMFLNLGPN…IDFVMSDVDR (386 aa).

In the N-terminal section; belongs to the complex I 30 kDa subunit family. It in the C-terminal section; belongs to the complex I 49 kDa subunit family. NDH-1 is composed of 13 different subunits. Subunits NuoB, CD, E, F, and G constitute the peripheral sector of the complex.

It localises to the cell inner membrane. It catalyses the reaction a quinone + NADH + 5 H(+)(in) = a quinol + NAD(+) + 4 H(+)(out). Functionally, NDH-1 shuttles electrons from NADH, via FMN and iron-sulfur (Fe-S) centers, to quinones in the respiratory chain. The immediate electron acceptor for the enzyme in this species is believed to be ubiquinone. Couples the redox reaction to proton translocation (for every two electrons transferred, four hydrogen ions are translocated across the cytoplasmic membrane), and thus conserves the redox energy in a proton gradient. The sequence is that of NADH-quinone oxidoreductase subunit C/D from Proteus mirabilis (strain HI4320).